Reading from the N-terminus, the 325-residue chain is DNA-directed RNA polymerase subunit alpha (325 aa).

An alpha N-terminal domain (alpha-NTD) region spans residues 1 to 238; the sequence is MSPKNLLKGF…DHLTVFINFE (238 aa). The tract at residues 255–325 is alpha C-terminal domain (alpha-CTD); that stretch reads LKAALSKHVE…MGLSFGMRDF (71 aa).

The protein belongs to the RNA polymerase alpha chain family. As to quaternary structure, homodimer. The RNAP catalytic core consists of 2 alpha, 1 beta, 1 beta' and 1 omega subunit. When a sigma factor is associated with the core the holoenzyme is formed, which can initiate transcription.

The catalysed reaction is RNA(n) + a ribonucleoside 5'-triphosphate = RNA(n+1) + diphosphate. In terms of biological role, DNA-dependent RNA polymerase catalyzes the transcription of DNA into RNA using the four ribonucleoside triphosphates as substrates. This Leptospira biflexa serovar Patoc (strain Patoc 1 / Ames) protein is DNA-directed RNA polymerase subunit alpha.